Consider the following 593-residue polypeptide: DNA primase (593 aa).

The segment at 40-64 (CPFHHEKTPSFTVSQKKQFYHCFGC) adopts a CHC2-type zinc-finger fold. The region spanning 260–342 (KQLLVVEGYM…GRQLKFIFLP (83 aa)) is the Toprim domain. The Mg(2+) site is built by Glu-266, Asp-310, and Asp-312.

Belongs to the DnaG primase family. As to quaternary structure, monomer. Interacts with DnaB. Requires Zn(2+) as cofactor. Mg(2+) serves as cofactor.

The catalysed reaction is ssDNA + n NTP = ssDNA/pppN(pN)n-1 hybrid + (n-1) diphosphate.. RNA polymerase that catalyzes the synthesis of short RNA molecules used as primers for DNA polymerase during DNA replication. The protein is DNA primase of Haemophilus influenzae (strain ATCC 51907 / DSM 11121 / KW20 / Rd).